The chain runs to 159 residues: Outer envelope pore protein 16-3, chloroplastic/mitochondrial (159 aa).

An N-acetylmethionine modification is found at Met-1. Positions 1 to 65 (MDPAEMRYLE…IRTLKMMGTH (65 aa)) are contains beta strands. Helical transmembrane passes span 24-40 (ITGF…LATW), 62-79 (MGTH…YIGV), and 92-109 (FYNG…VLGY).

Belongs to the Tim17/Tim22/Tim23 family. Plastid outer envelope porin OEP16 (TC 1.B.30) subfamily. In terms of assembly, homodimer and oligomers in membrane. Part of both the NADH-ubiquinone oxidoreductase complex I and of the TIM17:23 complex. Interacts with TIM23-2.

It localises to the plastid. It is found in the chloroplast outer membrane. Its subcellular location is the mitochondrion outer membrane. The protein localises to the mitochondrion inner membrane. Voltage-dependent high-conductance channel with a slight cation-selectivity; selective for amino acids but excludes triosephosphates or uncharged sugars. Non-essential amino acid-selective channel protein and translocation pore for NADPH:protochlorophyllide oxidoreductase A (PORA) and possibly PORB. This chain is Outer envelope pore protein 16-3, chloroplastic/mitochondrial (OEP163), found in Arabidopsis thaliana (Mouse-ear cress).